A 360-amino-acid chain; its full sequence is Peptide chain release factor 1 (360 aa).

Residue Gln235 is modified to N5-methylglutamine.

It belongs to the prokaryotic/mitochondrial release factor family. In terms of processing, methylated by PrmC. Methylation increases the termination efficiency of RF1.

It is found in the cytoplasm. Functionally, peptide chain release factor 1 directs the termination of translation in response to the peptide chain termination codons UAG and UAA. This chain is Peptide chain release factor 1, found in Delftia acidovorans (strain DSM 14801 / SPH-1).